Consider the following 249-residue polypeptide: Coproheme decarboxylase (249 aa).

Fe-coproporphyrin III-binding positions include arginine 131, 145–149 (YPMDK), histidine 172, and glutamine 185. The active site involves tyrosine 145.

This sequence belongs to the ChdC family. Type 1 subfamily. Requires Fe-coproporphyrin III as cofactor.

The catalysed reaction is Fe-coproporphyrin III + 2 H2O2 + 2 H(+) = heme b + 2 CO2 + 4 H2O. It catalyses the reaction Fe-coproporphyrin III + H2O2 + H(+) = harderoheme III + CO2 + 2 H2O. It carries out the reaction harderoheme III + H2O2 + H(+) = heme b + CO2 + 2 H2O. Its pathway is porphyrin-containing compound metabolism; protoheme biosynthesis. Functionally, involved in coproporphyrin-dependent heme b biosynthesis. Catalyzes the decarboxylation of Fe-coproporphyrin III (coproheme) to heme b (protoheme IX), the last step of the pathway. The reaction occurs in a stepwise manner with a three-propionate intermediate. This Staphylococcus saprophyticus subsp. saprophyticus (strain ATCC 15305 / DSM 20229 / NCIMB 8711 / NCTC 7292 / S-41) protein is Coproheme decarboxylase.